We begin with the raw amino-acid sequence, 651 residues long: Acetyl-coenzyme A synthetase (651 aa).

CoA contacts are provided by residues 191 to 194 (RGGK), T311, and N335. ATP-binding positions include 387–389 (GEP), 411–416 (DTWWQT), D500, and R515. S523 is a binding site for CoA. R526 lines the ATP pocket. Mg(2+)-binding residues include V537, H539, and V542. R584 serves as a coordination point for CoA. K609 is subject to N6-acetyllysine.

This sequence belongs to the ATP-dependent AMP-binding enzyme family. Requires Mg(2+) as cofactor. In terms of processing, acetylated. Deacetylation by the SIR2-homolog deacetylase activates the enzyme.

The catalysed reaction is acetate + ATP + CoA = acetyl-CoA + AMP + diphosphate. Catalyzes the conversion of acetate into acetyl-CoA (AcCoA), an essential intermediate at the junction of anabolic and catabolic pathways. AcsA undergoes a two-step reaction. In the first half reaction, AcsA combines acetate with ATP to form acetyl-adenylate (AcAMP) intermediate. In the second half reaction, it can then transfer the acetyl group from AcAMP to the sulfhydryl group of CoA, forming the product AcCoA. This Pseudomonas savastanoi pv. phaseolicola (strain 1448A / Race 6) (Pseudomonas syringae pv. phaseolicola (strain 1448A / Race 6)) protein is Acetyl-coenzyme A synthetase.